The chain runs to 450 residues: 23S rRNA (uracil(1939)-C(5))-methyltransferase RlmD (450 aa).

The segment at 1 to 22 (MAKHDRGLRFQPAGGSRAPQIP) is disordered. Residues 20–78 (QIPVGKKQRLTIQRLANDGRGIAFVEGRTWFVSGALAGEEVEARVLGSHGKVVEARAER) enclose the TRAM domain. Cysteine 91, cysteine 97, cysteine 100, and cysteine 179 together coordinate [4Fe-4S] cluster. Glutamine 283, phenylalanine 312, asparagine 317, glutamate 333, aspartate 360, and aspartate 381 together coordinate S-adenosyl-L-methionine. Cysteine 407 acts as the Nucleophile in catalysis.

Belongs to the class I-like SAM-binding methyltransferase superfamily. RNA M5U methyltransferase family. RlmD subfamily.

It carries out the reaction uridine(1939) in 23S rRNA + S-adenosyl-L-methionine = 5-methyluridine(1939) in 23S rRNA + S-adenosyl-L-homocysteine + H(+). Its function is as follows. Catalyzes the formation of 5-methyl-uridine at position 1939 (m5U1939) in 23S rRNA. The polypeptide is 23S rRNA (uracil(1939)-C(5))-methyltransferase RlmD (Pseudomonas fluorescens (strain ATCC BAA-477 / NRRL B-23932 / Pf-5)).